The chain runs to 107 residues: MALLLFGLAAAAEIGGCFAFWSVLRLGKNPLWLAPGLVSLVVFAWLLTRSEATYAGRAYAAYGGVYIAASLVWLWLVEGTRPDRWDLAGALLCLAGAAVILFADRSP.

4 helical membrane-spanning segments follow: residues 1 to 21 (MALL…FAFW), 26 to 46 (LGKN…FAWL), 58 to 78 (AYAA…WLVE), and 87 to 107 (LAGA…DRSP).

The protein belongs to the UPF0060 family.

The protein resides in the cell inner membrane. The protein is UPF0060 membrane protein glr4174 of Gloeobacter violaceus (strain ATCC 29082 / PCC 7421).